A 496-amino-acid chain; its full sequence is Glutamate--tRNA ligase 2 (496 aa).

A 'HIGH' region motif is present at residues 13–23; the sequence is PSPTGRLHVGG. Residues 255–259 carry the 'KMSKS' region motif; the sequence is KLSKR. Lysine 258 is an ATP binding site.

The protein belongs to the class-I aminoacyl-tRNA synthetase family. Glutamate--tRNA ligase type 1 subfamily. Monomer.

Its subcellular location is the cytoplasm. It catalyses the reaction tRNA(Glu) + L-glutamate + ATP = L-glutamyl-tRNA(Glu) + AMP + diphosphate. Functionally, catalyzes the attachment of glutamate to tRNA(Glu) in a two-step reaction: glutamate is first activated by ATP to form Glu-AMP and then transferred to the acceptor end of tRNA(Glu). The polypeptide is Glutamate--tRNA ligase 2 (Rubrobacter xylanophilus (strain DSM 9941 / JCM 11954 / NBRC 16129 / PRD-1)).